Here is a 429-residue protein sequence, read N- to C-terminus: 26S proteasome regulatory subunit RPN7 (429 aa).

Phosphoserine is present on residues serine 8 and serine 77. A TPR repeat occupies 131–164 (AQAWINLGEYYAQIGDKDNAEKTLGKSLSKAIST). The 173-residue stretch at 223-395 (NFKEAAKLLV…GIVETNRPDN (173 aa)) folds into the PCI domain.

The 26S proteasome is composed of a core protease, known as the 20S proteasome, capped at one or both ends by the 19S regulatory complex (RC). The RC is composed of at least 18 different subunits in two subcomplexes, the base and the lid, which form the portions proximal and distal to the 20S proteolytic core, respectively. Component of the lid subcomplex of the 19S RC.

It is found in the nucleus. Functionally, component of the 19S cap proteasome complex which acts as a regulatory subunit of the 26S proteasome, involved in the ATP-dependent degradation of ubiquitinated proteins. In Saccharomyces cerevisiae (strain ATCC 204508 / S288c) (Baker's yeast), this protein is 26S proteasome regulatory subunit RPN7.